A 182-amino-acid chain; its full sequence is NADH-quinone oxidoreductase subunit I (182 aa).

4Fe-4S ferredoxin-type domains lie at 52-82 and 92-121; these read LTRD…LQKA and EFFR…LTPD. Positions 62, 65, 68, 72, 101, 104, 107, and 111 each coordinate [4Fe-4S] cluster.

The protein belongs to the complex I 23 kDa subunit family. As to quaternary structure, NDH-1 is composed of 13 different subunits. Subunits NuoA, H, J, K, L, M, N constitute the membrane sector of the complex. Requires [4Fe-4S] cluster as cofactor.

The protein localises to the cell inner membrane. The catalysed reaction is a quinone + NADH + 5 H(+)(in) = a quinol + NAD(+) + 4 H(+)(out). NDH-1 shuttles electrons from NADH, via FMN and iron-sulfur (Fe-S) centers, to quinones in the respiratory chain. The immediate electron acceptor for the enzyme in this species is believed to be ubiquinone. Couples the redox reaction to proton translocation (for every two electrons transferred, four hydrogen ions are translocated across the cytoplasmic membrane), and thus conserves the redox energy in a proton gradient. The chain is NADH-quinone oxidoreductase subunit I from Pseudomonas aeruginosa (strain LESB58).